A 476-amino-acid polypeptide reads, in one-letter code: Zinc transporter SLC39A7 (476 aa).

The helical transmembrane segment at 7 to 27 (APHWVAVGLLTWAALGLLVAG) threads the bilayer. Over residues 35–109 (HKDVEEDFHG…SHGHSHDSLH (75 aa)) the composition is skewed to basic and acidic residues. The segment at 35–131 (HKDVEEDFHG…HGTSREAGAP (97 aa)) is disordered. Histidine 73 is subject to Pros-methylhistidine. The span at 110-120 (HGGHGHAHREH) shows a compositional bias: basic residues. A run of 3 helical transmembrane segments spans residues 146 to 166 (ALGA…LIPV), 177 to 197 (LQIL…LHLI), and 222 to 242 (GPIL…LVVE). The disordered stretch occupies residues 249–320 (KGGHGHSHGH…QSPEEEKAGS (72 aa)). Basic and acidic residues predominate over residues 257–292 (GHGDRHAHGDSHTHGDRHECSSKEKPSTEEEKEVGG). The residue at position 283 (serine 283) is a Phosphoserine. Transmembrane regions (helical) follow at residues 393–413 (VTAI…GGAV) and 417–437 (VAGG…FIYV).

Belongs to the ZIP transporter (TC 2.A.5) family. KE4/Catsup subfamily. In terms of assembly, homodimer. Methylation at some His residue by METTL9 leads to reduced zinc-binding. In terms of processing, rapidly phosphorylated by CK2 following Zn(2+) treatment. This phosphorylation is required for efficient cytosolic Zn(2+) release. In terms of tissue distribution, widely expressed. Highly expressed in the intestinal crypts.

Its subcellular location is the endoplasmic reticulum membrane. It is found in the golgi apparatus. The protein localises to the cis-Golgi network membrane. The catalysed reaction is Zn(2+)(in) = Zn(2+)(out). Its function is as follows. Transports Zn(2+) from the endoplasmic reticulum (ER)/Golgi apparatus to the cytosol, playing an essential role in the regulation of cytosolic zinc levels. Acts as a gatekeeper of zinc release from intracellular stores, requiring post-translational activation by phosphorylation, resulting in activation of multiple downstream pathways leading to cell growth and proliferation. Has an essential role in B cell development and is required for proper B cell receptor signaling. Plays an important role in maintaining intestinal epithelial homeostasis and skin dermis development by regulating ER function. Controls cell signaling pathways involved in glucose metabolism in skeletal muscle. Has a protective role against ER stress in different biological contexts. Mediates Zn(2+)-induced ferroptosis. The polypeptide is Zinc transporter SLC39A7 (Slc39a7) (Mus musculus (Mouse)).